The following is a 64-amino-acid chain: Micrurotoxin 1 (64 aa).

5 disulfides stabilise this stretch: Cys-3-Cys-24, Cys-6-Cys-11, Cys-17-Cys-41, Cys-45-Cys-57, and Cys-58-Cys-63.

The protein belongs to the three-finger toxin family. Ancestral subfamily. As to expression, expressed by the venom gland.

Its subcellular location is the secreted. Its function is as follows. Allosteric modulator of the GABA(A) receptor (GABR), possibly increasing receptor affinity for the agonist, thus enhancing receptor opening and macroscopic desensitization. In vivo, intracerebroventricular injection into mice results in periods of reduced basal activity, followed by bursts of intense seizures and death. The chain is Micrurotoxin 1 from Micrurus mipartitus (Red-tailed coral snake).